We begin with the raw amino-acid sequence, 139 residues long: FLYWCH family member 2 (139 aa).

Disordered stretches follow at residues 1–36 (MPQPKPSEQEGESMKASQEPAPQPGTDVVPAAPRKP) and 86–139 (EAQR…STSP). Basic and acidic residues predominate over residues 98 to 107 (PEQKRSKQNL). The span at 120 to 130 (VSSSSSEETTV) shows a compositional bias: low complexity.

The protein is FLYWCH family member 2 (Flywch2) of Mus musculus (Mouse).